An 831-amino-acid chain; its full sequence is Zinc phosphodiesterase ELAC protein 2 (831 aa).

The N-terminal 16 residues, 1–16, are a transit peptide targeting the mitochondrion; that stretch reads MWALRSLLRPLGLRTM. Disordered regions lie at residues 15-47 and 179-227; these read TMSQ…PGGP and SERR…ANRK. Residues 186–212 are compositionally biased toward polar residues; the sequence is QQPSQSPRTSPNRLSPKQSSDSGSAEN. Phosphoserine is present on residues serine 191, serine 195, serine 200, serine 204, and serine 732. Residues 791-831 are disordered; the sequence is LTQQADSPEDREPQQKRAHTDEPHSPQSKKESVANTLGARV. Residue threonine 792 is modified to Phosphothreonine. Phosphoserine occurs at positions 797 and 815. A compositionally biased stretch (basic and acidic residues) spans 798 to 822; sequence PEDREPQQKRAHTDEPHSPQSKKES.

The protein belongs to the RNase Z family. In terms of assembly, homodimer. Interacts with PTCD1. Requires Zn(2+) as cofactor.

It localises to the mitochondrion. The protein resides in the mitochondrion matrix. The protein localises to the mitochondrion nucleoid. Its subcellular location is the nucleus. The catalysed reaction is Endonucleolytic cleavage of RNA, removing extra 3' nucleotides from tRNA precursor, generating 3' termini of tRNAs. A 3'-hydroxy group is left at the tRNA terminus and a 5'-phosphoryl group is left at the trailer molecule.. Its function is as follows. Zinc phosphodiesterase, which displays mitochondrial tRNA 3'-processing endonuclease activity. Involved in tRNA maturation, by removing a 3'-trailer from precursor tRNA. Associates with mitochondrial DNA complexes at the nucleoids to initiate RNA processing and ribosome assembly. The chain is Zinc phosphodiesterase ELAC protein 2 (Elac2) from Mus musculus (Mouse).